We begin with the raw amino-acid sequence, 73 residues long: Defensin-like protein 34 (73 aa).

A signal peptide spans 1-25 (MASNKVSFFLVLCLCVLSTAEFGEA). Disulfide bonds link cysteine 33–cysteine 59, cysteine 45–cysteine 68, and cysteine 49–cysteine 70.

This sequence belongs to the DEFL family.

It is found in the secreted. In Arabidopsis thaliana (Mouse-ear cress), this protein is Defensin-like protein 34.